Reading from the N-terminus, the 577-residue chain is Laccase-25 (577 aa).

The signal sequence occupies residues Met1–Ala22. 2 consecutive Plastocyanin-like domains span residues Asn30–Gly147 and Lys158–Ala313. Asn33 is a glycosylation site (N-linked (GlcNAc...) asparagine). Cu cation is bound by residues His81 and His83. Asn109 carries an N-linked (GlcNAc...) asparagine glycan. Cu cation is bound by residues His126 and His128. Asn169, Asn203, Asn208, Asn218, Asn332, Asn383, Asn396, Asn404, Asn441, and Asn459 each carry an N-linked (GlcNAc...) asparagine glycan. In terms of domain architecture, Plastocyanin-like 3 spans Asp423–Pro560. The Cu cation site is built by His477, His480, His482, His539, Cys540, His541, and His545.

This sequence belongs to the multicopper oxidase family. Cu cation is required as a cofactor.

The protein resides in the secreted. It is found in the extracellular space. It localises to the apoplast. The enzyme catalyses 4 hydroquinone + O2 = 4 benzosemiquinone + 2 H2O. In terms of biological role, lignin degradation and detoxification of lignin-derived products. In Oryza sativa subsp. japonica (Rice), this protein is Laccase-25 (LAC25).